The primary structure comprises 305 residues: Putative lipid kinase SAB0675c (305 aa).

The DAGKc domain occupies 3–139 (NKYTHGVLFY…YDVIKINNQY (137 aa)). Residues serine 44, 74–80 (GDGTVNE), and threonine 101 each bind ATP. Residues serine 220, aspartate 223, and glutamate 225 each coordinate Mg(2+). Residue glutamate 281 is the Proton acceptor of the active site.

The protein belongs to the diacylglycerol/lipid kinase family. Mg(2+) is required as a cofactor.

Its function is as follows. May catalyze the ATP-dependent phosphorylation of lipids other than diacylglycerol (DAG). This Staphylococcus aureus (strain bovine RF122 / ET3-1) protein is Putative lipid kinase SAB0675c.